Reading from the N-terminus, the 528-residue chain is Ulvan lyase, short isoform (528 aa).

An N-terminal signal peptide occupies residues 1–29 (MKINLSMRELVSRLSTTLKTAIALSVLTA). Residue cysteine 30 is the site of N-palmitoyl cysteine attachment. Cysteine 30 carries the S-diacylglycerol cysteine lipid modification. Position 151-152 (151-152 (SH)) interacts with substrate. Histidine 152 serves as the catalytic Proton donor/acceptor. Ca(2+) contacts are provided by aspartate 218, aspartate 228, and lysine 230. Tyrosine 309 and arginine 326 together coordinate substrate. Ca(2+)-binding residues include asparagine 329, aspartate 332, and phenylalanine 334. Substrate is bound at residue histidine 390.

It belongs to the polysaccharide lyase 24 family.

It localises to the secreted. The protein localises to the cell membrane. Its function is as follows. Ulvan lyase involved in ulvan degradation. Ulvan is the main polysaccharide component of the Ulvales (green seaweed) cell wall. It is composed of disaccharide building blocks comprising 3-sulfated rhamnose (Rha3S) linked to D-glucuronic acid (GlcA), L-iduronic acid (IduA), or D-xylose (Xyl). Ulvan lyase catalyzes preferentially the endolytic cleavage of the glycosidic bond between Rha3S and the uronic acid GlcA, but not IduA, producing oligosaccharides that have unsaturated 4-deoxy-L-threo-hex-4-enopyranosiduronic acid (deltaUA) at the non-reducing end. The most abundant end products in the degradation of the ulvan polysaccharide were deltaUA-Rha3S disaccharides and deltaUA-Rha3S-IduA-Rha3S and deltaUA-Rha3S-Xyl-Rha3S tetrasaccharides. The sequence is that of Ulvan lyase, short isoform from Alteromonas sp. (strain LOR).